A 209-amino-acid polypeptide reads, in one-letter code: NAD(P)H dehydrogenase (quinone) (209 aa).

A Flavodoxin-like domain is found at 4-199 (VNIIFHSVHA…EMARYQGRHV (196 aa)). FMN-binding positions include 10–15 (SVHAHI) and 87–89 (TRY). Tryptophan 107 lines the substrate pocket. FMN-binding positions include 122–128 (SSGTQHG) and histidine 143.

The protein belongs to the WrbA family. It depends on FMN as a cofactor.

It carries out the reaction a quinone + NADH + H(+) = a quinol + NAD(+). It catalyses the reaction a quinone + NADPH + H(+) = a quinol + NADP(+). In Methanosarcina mazei (strain ATCC BAA-159 / DSM 3647 / Goe1 / Go1 / JCM 11833 / OCM 88) (Methanosarcina frisia), this protein is NAD(P)H dehydrogenase (quinone).